Consider the following 429-residue polypeptide: Adenylosuccinate synthetase (429 aa).

Residues 12-18 (GDEGKGK) and 40-42 (GHT) contribute to the GTP site. The active-site Proton acceptor is the D13. The Mg(2+) site is built by D13 and G40. IMP is bound by residues 13-16 (DEGK), 38-41 (NAGH), T129, R143, Q224, T239, and R303. H41 acts as the Proton donor in catalysis. 299–305 (ATTGRRR) contributes to the substrate binding site. GTP contacts are provided by residues R305, 331–333 (KLD), and 413–415 (SVG).

It belongs to the adenylosuccinate synthetase family. In terms of assembly, homodimer. The cofactor is Mg(2+).

It is found in the cytoplasm. The enzyme catalyses IMP + L-aspartate + GTP = N(6)-(1,2-dicarboxyethyl)-AMP + GDP + phosphate + 2 H(+). It participates in purine metabolism; AMP biosynthesis via de novo pathway; AMP from IMP: step 1/2. Its function is as follows. Plays an important role in the de novo pathway of purine nucleotide biosynthesis. Catalyzes the first committed step in the biosynthesis of AMP from IMP. The chain is Adenylosuccinate synthetase from Desulforapulum autotrophicum (strain ATCC 43914 / DSM 3382 / VKM B-1955 / HRM2) (Desulfobacterium autotrophicum).